An 873-amino-acid chain; its full sequence is Calmodulin-dependent glutamylase SidJ (873 aa).

The disordered stretch occupies residues 16–90 (QSEDNPSETA…TTSTTKQKGP (75 aa)). A compositionally biased stretch (polar residues) spans 22–58 (SETAVETTDVSTKIKTTDTTQEESSVKTKTVVPTQPG). Mg(2+) contacts are provided by D542 and D545. A disordered region spans residues 851–873 (NLSEKSDIDSEKPESERTTDKRL).

As to quaternary structure, interacts with host calmodulin/CALM1; this interaction is required for glutamylase activity. The cofactor is Mg(2+).

The catalysed reaction is L-glutamyl-[protein] + L-glutamate + ATP = gamma-L-glutamyl-L-glutamyl-[protein] + ADP + phosphate + H(+). It carries out the reaction (L-glutamyl)(n)-gamma-L-glutamyl-L-glutamyl-[protein] + L-glutamate + ATP = (L-glutamyl)(n+1)-gamma-L-glutamyl-L-glutamyl-[protein] + ADP + phosphate + H(+). Glytamylation catalyzed by SidJ requires host calmodulin and can be regulated by intracellular changes in Ca2+ concentrations. Also requires ATP. In terms of biological role, glutamylase that mediates the covalent attachment of glutamate moieties to SdeA on one of the catalytic residues that is required for its mono-ADP-ribosyltransferase activity. In turn, inhibits SdeA ubiquitinating activity. Also glutamylates related SdeB, SdeC and SidE. Glutamylase activity only occurs in the host since it requires host calmodulin. May also reverse the SdeA-mediated substrate ubiquitination by cleaving the phosphodiester bond that links phosphoribosylated ubiquitin to protein substrates via its deubiquitinase activity. This is Calmodulin-dependent glutamylase SidJ from Legionella pneumophila subsp. pneumophila (strain Philadelphia 1 / ATCC 33152 / DSM 7513).